The primary structure comprises 524 residues: Histidine ammonia-lyase (524 aa).

The segment at residues 139 to 141 (ASG) is a cross-link (5-imidazolinone (Ala-Gly)). A 2,3-didehydroalanine (Ser) modification is found at serine 140. A disordered region spans residues 500-524 (ADTQAPAPAKLPDSGDEDRDTTSRH).

This sequence belongs to the PAL/histidase family. Post-translationally, contains an active site 4-methylidene-imidazol-5-one (MIO), which is formed autocatalytically by cyclization and dehydration of residues Ala-Ser-Gly.

The protein localises to the cytoplasm. The catalysed reaction is L-histidine = trans-urocanate + NH4(+). The protein operates within amino-acid degradation; L-histidine degradation into L-glutamate; N-formimidoyl-L-glutamate from L-histidine: step 1/3. The polypeptide is Histidine ammonia-lyase (hutH) (Deinococcus radiodurans (strain ATCC 13939 / DSM 20539 / JCM 16871 / CCUG 27074 / LMG 4051 / NBRC 15346 / NCIMB 9279 / VKM B-1422 / R1)).